We begin with the raw amino-acid sequence, 272 residues long: Undecaprenyl-diphosphatase (272 aa).

7 helical membrane passes run 6–26 (SLLIAFILGVVEGLTEFLPVS), 45–65 (AKTFEVIIQLGSILAVVVMFW), 92–112 (THILLAMIPAVVLGLIFHDVI), 115–135 (LFYPQNVMYSLVIGGFLLLAA), 189–209 (YAASEFSFILAVPMMMGATVL), 221–241 (ADVPMFAVGFVTAFVVALIAI), and 251–271 (ISFIPFAIYRFIVAGVVYMVF).

The protein belongs to the UppP family.

Its subcellular location is the cell inner membrane. The catalysed reaction is di-trans,octa-cis-undecaprenyl diphosphate + H2O = di-trans,octa-cis-undecaprenyl phosphate + phosphate + H(+). Its function is as follows. Catalyzes the dephosphorylation of undecaprenyl diphosphate (UPP). Confers resistance to bacitracin. The sequence is that of Undecaprenyl-diphosphatase from Pectobacterium atrosepticum (strain SCRI 1043 / ATCC BAA-672) (Erwinia carotovora subsp. atroseptica).